The chain runs to 216 residues: MDNTSKINKITKIEVQKRNKKRVNLYINDEYAMAFSTELAFKHNLKIGQEVDYKELKVIAEEDNYIKCKGDALKFIEKSYKTERQVYDKLLSKGYDNKTIERVIDFLTEYKFIDDWRFGELYIEERLKREGRNKIKYSLMQKGISESIIDEKLNCVDRDKEKDALNKIAEKKYKSILKNEEDKTKIYNKLGRFLMSKGYLWEDVKSVLNKLLYSDG.

It belongs to the RecX family.

It is found in the cytoplasm. Its function is as follows. Modulates RecA activity. The polypeptide is Regulatory protein RecX (Clostridium tetani (strain Massachusetts / E88)).